We begin with the raw amino-acid sequence, 303 residues long: Porphobilinogen deaminase (303 aa).

Residue cysteine 241 is modified to S-(dipyrrolylmethanemethyl)cysteine.

It belongs to the HMBS family. As to quaternary structure, monomer. Dipyrromethane is required as a cofactor.

The catalysed reaction is 4 porphobilinogen + H2O = hydroxymethylbilane + 4 NH4(+). It functions in the pathway porphyrin-containing compound metabolism; protoporphyrin-IX biosynthesis; coproporphyrinogen-III from 5-aminolevulinate: step 2/4. The protein operates within porphyrin-containing compound metabolism; chlorophyll biosynthesis. In terms of biological role, tetrapolymerization of the monopyrrole PBG into the hydroxymethylbilane pre-uroporphyrinogen in several discrete steps. The sequence is that of Porphobilinogen deaminase from Roseiflexus castenholzii (strain DSM 13941 / HLO8).